Here is a 311-residue protein sequence, read N- to C-terminus: Pyrimidine-specific ribonucleoside hydrolase RihA (311 aa).

The active site involves His240.

This sequence belongs to the IUNH family. RihA subfamily.

Hydrolyzes cytidine or uridine to ribose and cytosine or uracil, respectively. The chain is Pyrimidine-specific ribonucleoside hydrolase RihA from Salmonella newport (strain SL254).